The chain runs to 360 residues: BLOC-1-related complex subunit 6 (360 aa).

Residues 1 to 10 (MEAARGRLGP) show a composition bias toward basic and acidic residues. The disordered stretch occupies residues 1 to 201 (MEAARGRLGP…AGAGGGRRAT (201 aa)). Over residues 23–35 (VTFSGRPSRTLSK) the composition is skewed to polar residues. Threonine 41 bears the Phosphothreonine mark. Residues 71-83 (HRPELDTWEDKPS) are compositionally biased toward basic and acidic residues. Residues 89–100 (SGARGSRGTSGS) show a composition bias toward low complexity. The residue at position 130 (serine 130) is a Phosphoserine. A compositionally biased stretch (acidic residues) spans 144 to 156 (EGDDDDDGDDEEA). Serine 173 bears the Phosphoserine mark. The segment covering 179-198 (GACGGGGSSSSGEAGAGGGR) has biased composition (gly residues). Threonine 201 bears the Phosphothreonine mark. Residue serine 204 is modified to Phosphoserine.

It belongs to the BORCS6 family. In terms of assembly, component of the BLOC-one-related complex (BORC) which is composed of BLOC1S1, BLOC1S2, BORCS5, BORCS6, BORCS7, BORCS8, KXD1 and SNAPIN.

Its subcellular location is the lysosome membrane. Functionally, as part of the BORC complex may play a role in lysosomes movement and localization at the cell periphery. Associated with the cytosolic face of lysosomes, the BORC complex may recruit ARL8B and couple lysosomes to microtubule plus-end-directed kinesin motor. In Rattus norvegicus (Rat), this protein is BLOC-1-related complex subunit 6.